We begin with the raw amino-acid sequence, 555 residues long: Urocanate hydratase (555 aa).

NAD(+) contacts are provided by residues 52-53 (GG), Gln130, 176-178 (GMG), Glu196, Arg201, 242-243 (NA), 263-267 (QTSAH), 273-274 (YL), and Tyr322. The active site involves Cys410. NAD(+) is bound at residue Gly492.

Belongs to the urocanase family. NAD(+) serves as cofactor.

It localises to the cytoplasm. It carries out the reaction 4-imidazolone-5-propanoate = trans-urocanate + H2O. The protein operates within amino-acid degradation; L-histidine degradation into L-glutamate; N-formimidoyl-L-glutamate from L-histidine: step 2/3. In terms of biological role, catalyzes the conversion of urocanate to 4-imidazolone-5-propionate. The sequence is that of Urocanate hydratase from Shewanella baltica (strain OS195).